We begin with the raw amino-acid sequence, 71 residues long: 7.9 kDa protein (71 aa).

The sequence is that of 7.9 kDa protein from Pseudomonas aeruginosa (Bacteriophage Pf3).